The sequence spans 492 residues: Steroid 21-hydroxylase (492 aa).

Residues Arg91 and Lys120 each contribute to the heme b site. Arg231 provides a ligand contact to 17alpha-hydroxyprogesterone. Arg231 is a binding site for progesterone. Residues His363, Arg424, and Cys426 each contribute to the heme b site.

Belongs to the cytochrome P450 family. It depends on heme b as a cofactor.

Its subcellular location is the endoplasmic reticulum membrane. It localises to the microsome membrane. It carries out the reaction 17alpha-hydroxyprogesterone + reduced [NADPH--hemoprotein reductase] + O2 = 11-deoxycortisol + oxidized [NADPH--hemoprotein reductase] + H2O + H(+). The catalysed reaction is progesterone + reduced [NADPH--hemoprotein reductase] + O2 = 21-hydroxyprogesterone + oxidized [NADPH--hemoprotein reductase] + H2O + H(+). Functionally, specifically catalyzes the 21-hydroxylation of steroids. Required for the adrenal synthesis of mineralocorticoids and glucocorticoids. This is Steroid 21-hydroxylase (CYP21) from Canis lupus familiaris (Dog).